The chain runs to 342 residues: Tetraacyldisaccharide 4'-kinase (342 aa).

68–75 lines the ATP pocket; the sequence is TVGGTGKT.

Belongs to the LpxK family.

It carries out the reaction a lipid A disaccharide + ATP = a lipid IVA + ADP + H(+). It functions in the pathway glycolipid biosynthesis; lipid IV(A) biosynthesis; lipid IV(A) from (3R)-3-hydroxytetradecanoyl-[acyl-carrier-protein] and UDP-N-acetyl-alpha-D-glucosamine: step 6/6. Its function is as follows. Transfers the gamma-phosphate of ATP to the 4'-position of a tetraacyldisaccharide 1-phosphate intermediate (termed DS-1-P) to form tetraacyldisaccharide 1,4'-bis-phosphate (lipid IVA). The chain is Tetraacyldisaccharide 4'-kinase from Burkholderia ambifaria (strain ATCC BAA-244 / DSM 16087 / CCUG 44356 / LMG 19182 / AMMD) (Burkholderia cepacia (strain AMMD)).